The primary structure comprises 263 residues: Probable ribosomal RNA small subunit methyltransferase A (263 aa).

S-adenosyl-L-methionine is bound by residues L12, G37, E58, D83, and N100.

This sequence belongs to the class I-like SAM-binding methyltransferase superfamily. rRNA adenine N(6)-methyltransferase family. RsmA subfamily.

It is found in the cytoplasm. Functionally, specifically dimethylates two adjacent adenosines in the loop of a conserved hairpin near the 3'-end of 16S rRNA in the 30S particle. May play a critical role in biogenesis of 30S subunits. In Methanococcus maripaludis (strain C5 / ATCC BAA-1333), this protein is Probable ribosomal RNA small subunit methyltransferase A.